A 187-amino-acid polypeptide reads, in one-letter code: Ribosome maturation factor RimM (187 aa).

A PRC barrel domain is found at 111 to 187 (KDEYYWVDLI…RILVDWQADF (77 aa)).

The protein belongs to the RimM family. As to quaternary structure, binds ribosomal protein uS19.

It localises to the cytoplasm. Its function is as follows. An accessory protein needed during the final step in the assembly of 30S ribosomal subunit, possibly for assembly of the head region. Essential for efficient processing of 16S rRNA. May be needed both before and after RbfA during the maturation of 16S rRNA. It has affinity for free ribosomal 30S subunits but not for 70S ribosomes. The protein is Ribosome maturation factor RimM of Albidiferax ferrireducens (strain ATCC BAA-621 / DSM 15236 / T118) (Rhodoferax ferrireducens).